We begin with the raw amino-acid sequence, 154 residues long: Putative flagella-related protein G (154 aa).

Residues 9-29 (MSEIVMFVAVLLIAAFVAGIL) traverse the membrane as a helical segment.

Belongs to the archaeal FlaG family.

The protein localises to the cell membrane. The protein resides in the archaeal flagellum. This Methanocaldococcus jannaschii (strain ATCC 43067 / DSM 2661 / JAL-1 / JCM 10045 / NBRC 100440) (Methanococcus jannaschii) protein is Putative flagella-related protein G (flaG).